The chain runs to 180 residues: Large ribosomal subunit protein uL5 (180 aa).

Belongs to the universal ribosomal protein uL5 family. Part of the 50S ribosomal subunit; part of the 5S rRNA/L5/L18/L25 subcomplex. Contacts the 5S rRNA and the P site tRNA. Forms a bridge to the 30S subunit in the 70S ribosome.

In terms of biological role, this is one of the proteins that bind and probably mediate the attachment of the 5S RNA into the large ribosomal subunit, where it forms part of the central protuberance. In the 70S ribosome it contacts protein S13 of the 30S subunit (bridge B1b), connecting the 2 subunits; this bridge is implicated in subunit movement. Contacts the P site tRNA; the 5S rRNA and some of its associated proteins might help stabilize positioning of ribosome-bound tRNAs. The protein is Large ribosomal subunit protein uL5 of Rippkaea orientalis (strain PCC 8801 / RF-1) (Cyanothece sp. (strain PCC 8801)).